Consider the following 141-residue polypeptide: Oleosin L (141 aa).

The next 3 membrane-spanning stretches (helical) occupy residues 23-43 (VLFF…LALA), 46-66 (VVLM…ILPV), and 74-94 (AAAF…LIWV). Positions 54–65 (PVFLLLSPVILP) match the Proline-knot motif.

Belongs to the oleosin family. Expressed in megagametophytes (at protein level).

Its subcellular location is the lipid droplet. The protein localises to the membrane. The chain is Oleosin L from Pinus massoniana (Chinese red pine).